Consider the following 367-residue polypeptide: MAIKTENFILNIGPQHPSTHGVFRLRIVLDGEVITDLEPVFGYLHRGIEKLAEGRTYLQDIPFTDRLDYLGSMTNNHAYVMAVEKLAGITVPERAEYIRVILDELQRIASHLAGLGFFLNDLGALQTPLLYMFREREKIVELFDMCSGQRLNYNYYRFGGFVQDLPEEFLPALKILLDTLPGFIDEYEQLISTNEIVLIRTKGVGVLKRDLAINSSAAGPVLRASGINWDIRRNDPYSIYNRFEFDIPIAKNGDTYDRYMIRILEMRQSVWILRQAVKDLPEGEIMGKAPKLLKPPAGEVYSRIEGPKGELGFYLVSDGTDKPYRWRVRPPCLLNLSALKDMVVGWKVADLMAIFGSIDIVMGEVDR.

This sequence belongs to the complex I 49 kDa subunit family. In terms of assembly, NDH-1 is composed of 14 different subunits. Subunits NuoB, C, D, E, F, and G constitute the peripheral sector of the complex.

The protein localises to the cell membrane. It carries out the reaction a quinone + NADH + 5 H(+)(in) = a quinol + NAD(+) + 4 H(+)(out). NDH-1 shuttles electrons from NADH, via FMN and iron-sulfur (Fe-S) centers, to quinones in the respiratory chain. The immediate electron acceptor for the enzyme in this species is believed to be ubiquinone. Couples the redox reaction to proton translocation (for every two electrons transferred, four hydrogen ions are translocated across the cytoplasmic membrane), and thus conserves the redox energy in a proton gradient. This chain is NADH-quinone oxidoreductase subunit D, found in Dehalococcoides mccartyi (strain CBDB1).